We begin with the raw amino-acid sequence, 625 residues long: MRLAASSLLLGAAASLLSSATALAVRSDNPGSSAGYFVRSLPGQPPGPLIKMHAGHIEVDHATNGNLFFWHFQNKHIANRQRTVIWLNGGPGCSSMDGALMEVGPYRLKDDHTLAENEGSWHEFANLLFVDQPVGTGFSYVNTDSYLTELTQMSDHFIKFLTKFFELFPEYESDDIYLSGESYAGQHIPYIADAILKRNADASIKWNVKGLLIGNGWIDPSNQYLSYLPFAYESGIVEKGSPIADQIEKQVAVCVKTIAEKGRHHVDLNQCEQILQDILAKTKHHKDGKEVCWNMYDVRLEDTYPSCGMNWPPDLSSLTPYLRRKDVLQALHVNPDKTAGWTECAGAVSSSFRALKSKPSVELLPDLLKEMPILLFSGNKDLICNHIGTEELIHNMEWNGGKGFELDGAPGTWAPREDWVFEDEPAGIYQSARNLTYVLIYNSSHMVPFDFSRRTRDMLDRFMEVDIGKIGGTPADSVIGGEKAPITSVGGTPNSTAAVEKEKERVDQARWAAYYRSGEVALVLVASAAAIWGIFIWRQRHRRRGRRGSYAGLGGLKMTGGSRDRLADGRESFDEDELRDLTVASPMFERDRDLEAAEARRYSLGGVSDDESDDEGRIEKRPSVG.

The N-terminal stretch at 1–24 (MRLAASSLLLGAAASLLSSATALA) is a signal peptide. The Lumenal segment spans residues 25-516 (VRSDNPGSSA…DQARWAAYYR (492 aa)). Residues Ser-182 and Asp-381 contribute to the active site. N-linked (GlcNAc...) asparagine glycans are attached at residues Asn-434 and Asn-442. The active site involves His-445. Asn-494 is a glycosylation site (N-linked (GlcNAc...) asparagine). Residues 517-537 (SGEVALVLVASAAAIWGIFIW) traverse the membrane as a helical segment. Residues 538–625 (RQRHRRRGRR…GRIEKRPSVG (88 aa)) are Cytoplasmic-facing. The tract at residues 601 to 625 (RYSLGGVSDDESDDEGRIEKRPSVG) is disordered. Positions 615 to 625 (EGRIEKRPSVG) are enriched in basic and acidic residues.

This sequence belongs to the peptidase S10 family.

It is found in the golgi apparatus. The protein localises to the trans-Golgi network membrane. The catalysed reaction is Preferential release of a C-terminal arginine or lysine residue.. Its function is as follows. Protease with a carboxypeptidase B-like function involved in the C-terminal processing of the lysine and arginine residues from protein precursors. Promotes cell fusion and is involved in the programmed cell death. The chain is Pheromone-processing carboxypeptidase KEX1 (KEX1) from Tuber melanosporum (strain Mel28) (Perigord black truffle).